The sequence spans 382 residues: Innexin-8 (382 aa).

The next 4 helical transmembrane spans lie at 29 to 49, 103 to 123, 187 to 207, and 270 to 290; these read LITA…TYVG, QWSS…KFLW, VIKI…AIFL, and IFLF…IAHF.

Belongs to the pannexin family.

It is found in the cell membrane. Its subcellular location is the cell junction. The protein localises to the gap junction. In terms of biological role, structural component of the gap junctions. The polypeptide is Innexin-8 (inx-8) (Caenorhabditis elegans).